The following is a 426-amino-acid chain: MTSSADLTNLKELLSLYKSLKFSDSAAIEKYNSLVEWGTSTYWKIGVQKVANVETSISDYYDEVKNKPFNIDPGYYIFLPVYFGSVFIYSKGKNMVELGSGNSFQIPDDMRSACNKVLDSDNGIDFLRFVLLNNRWIMEDAISKYQSPVNIFKLASEYGLNIPKYLEIEIEEDTLFDDELYSIIERSFDDKFPKISISYIKLGELRRQVVDFFKFSFMYIESIKVDRIGDNIFIPSVITKSGKKILVKDVDHLIRSKVREHTFVKVKKKNTFSILYDYDGNGTETRGEVIKRIIDTIGRDYYVNGKYFSKVGSAGLKQLTNKLDINECATVDELVDEINKSGTVKRKIKNQSAFDLSRECLGYPEADFITLVNNMRFKIENCKVVNFNIENTNCLNNPSIETIYGNFNQFVSIFNIVTDVKKRLFE.

The protein belongs to the poxviruses A20 family. In terms of assembly, interacts with the DNA polymerase catalytic subunit E9. Interacts with UDG. Component of the Uracil-DNA glycosylase(UDG)-A20-polymerase complex; A20 and UDG form a heterodimeric processivity factor that associates with E9 to form the processive polymerase holoenzyme. Interacts with D5.

In terms of biological role, plays an essential role in viral DNA replication by acting as the polymerase processivity factor together with protein D4. May serve as a bridge which links the DNA polymerase E9 and the uracil DNA glycosylase. The chain is DNA polymerase processivity factor component A20 from Vaccinia virus (strain Ankara) (VACV).